We begin with the raw amino-acid sequence, 122 residues long: Fluoride-specific ion channel FluC 2 (122 aa).

4 helical membrane passes run 3 to 23, 38 to 58, 62 to 82, and 93 to 113; these read ITAI…RMFI, TSIV…LNLT, LLLL…SFIY, and FMHL…CFYL. Na(+) is bound by residues G72 and S75.

This sequence belongs to the fluoride channel Fluc/FEX (TC 1.A.43) family.

The protein resides in the cell inner membrane. The enzyme catalyses fluoride(in) = fluoride(out). With respect to regulation, na(+) is not transported, but it plays an essential structural role and its presence is essential for fluoride channel function. Its function is as follows. Fluoride-specific ion channel. Important for reducing fluoride concentration in the cell, thus reducing its toxicity. This Prochlorococcus marinus (strain MIT 9312) protein is Fluoride-specific ion channel FluC 2.